The chain runs to 445 residues: TNF receptor-associated factor family protein DDB_G0290971 (445 aa).

The segment at 23–67 (CPICFDLYYSSSSKKEVFQCRDGHLACKSCWSDSLLNKKECMICR) adopts an RING-type; degenerate zinc-finger fold. 2 consecutive TRAF-type zinc fingers follow at residues 133 to 186 (KHQV…QLDA) and 186 to 242 (AHAL…ESID). A coiled-coil region spans residues 269–307 (QLELVECKNQIYQINNKYEKLLERVIKLEQLSMDASNKL). Residues 314-441 (KNSIIFATFS…EDKLVIGLRI (128 aa)) form the MATH domain.

The protein belongs to the TNF receptor-associated factor family. A subfamily.

Its subcellular location is the cytoplasm. Its function is as follows. Probable adapter protein and signal transducer that links members of the tumor necrosis factor receptor family to different signaling pathways by association with the receptor cytoplasmic domain and kinases. In Dictyostelium discoideum (Social amoeba), this protein is TNF receptor-associated factor family protein DDB_G0290971.